We begin with the raw amino-acid sequence, 123 residues long: Small ribosomal subunit protein uS12 (123 aa).

Asp89 carries the 3-methylthioaspartic acid modification.

Belongs to the universal ribosomal protein uS12 family. Part of the 30S ribosomal subunit. Contacts proteins S8 and S17. May interact with IF1 in the 30S initiation complex.

Its function is as follows. With S4 and S5 plays an important role in translational accuracy. Functionally, interacts with and stabilizes bases of the 16S rRNA that are involved in tRNA selection in the A site and with the mRNA backbone. Located at the interface of the 30S and 50S subunits, it traverses the body of the 30S subunit contacting proteins on the other side and probably holding the rRNA structure together. The combined cluster of proteins S8, S12 and S17 appears to hold together the shoulder and platform of the 30S subunit. This Rhizobium leguminosarum bv. trifolii (strain WSM2304) protein is Small ribosomal subunit protein uS12.